We begin with the raw amino-acid sequence, 573 residues long: Dihydroxy-acid dehydratase (573 aa).

Over residues methionine 1–alanine 14 the composition is skewed to basic and acidic residues. A disordered region spans residues methionine 1–arginine 21. Cysteine 55 provides a ligand contact to [2Fe-2S] cluster. Aspartate 87 contributes to the Mg(2+) binding site. Residue cysteine 128 coordinates [2Fe-2S] cluster. Aspartate 129 and lysine 130 together coordinate Mg(2+). Residue lysine 130 is modified to N6-carboxylysine. Residue cysteine 200 coordinates [2Fe-2S] cluster. Glutamate 450 contacts Mg(2+). Serine 476 serves as the catalytic Proton acceptor.

This sequence belongs to the IlvD/Edd family. Homodimer. Requires [2Fe-2S] cluster as cofactor. Mg(2+) serves as cofactor.

The catalysed reaction is (2R)-2,3-dihydroxy-3-methylbutanoate = 3-methyl-2-oxobutanoate + H2O. The enzyme catalyses (2R,3R)-2,3-dihydroxy-3-methylpentanoate = (S)-3-methyl-2-oxopentanoate + H2O. Its pathway is amino-acid biosynthesis; L-isoleucine biosynthesis; L-isoleucine from 2-oxobutanoate: step 3/4. It functions in the pathway amino-acid biosynthesis; L-valine biosynthesis; L-valine from pyruvate: step 3/4. Functionally, functions in the biosynthesis of branched-chain amino acids. Catalyzes the dehydration of (2R,3R)-2,3-dihydroxy-3-methylpentanoate (2,3-dihydroxy-3-methylvalerate) into 2-oxo-3-methylpentanoate (2-oxo-3-methylvalerate) and of (2R)-2,3-dihydroxy-3-methylbutanoate (2,3-dihydroxyisovalerate) into 2-oxo-3-methylbutanoate (2-oxoisovalerate), the penultimate precursor to L-isoleucine and L-valine, respectively. The polypeptide is Dihydroxy-acid dehydratase (Koribacter versatilis (strain Ellin345)).